The primary structure comprises 1229 residues: MSLPERPGAKASYEQRNSYRKSPSRRNRPNDIEASGYYPVTGGQHQRGPSVNSFAETIRSPNSNIESAPLSPSAEQIEHGSDQPFQRKRSLIRPERNRIDRDHPNYHYRKHAAKMNTLPSSTGNDPVLEDVSGATESGPPSGSNSASGSGVREENIPRKSRKASGRETVAEKSDNTRRRVSTRNSKIVKEGKRKEKIPEQLRPPSAWNVYCAVITFWSPDFIMKCCGMPAKAQRRAWREKIGLISLILIIMGVVGFLTFGFNQAVCGGPVLRLHINSVDRSYMIFHGTAYNLDGSHHPVAEGIPKRLDGTGANVVYDLPEGYGGTDGSFMFQNVNGKCKGLITKAPNSDVPSEGDNLAWYFPCHARNQDGSSQPNMTYPYYFGYACHTTPLARSTFYTQLDKSADVYFTWADIRNNSRNLFVYSGNVLDLDLLFWFNRDQVNIPRRFEELRDKNNAANRAIRGRDATRTFMASGDRQIAECFEDIIKVGTVDTDTVGCIAAKVVLYVSLALILSVVGARFTLALIFQWFISKNYAADKTSQTSDKRKRNKQIEDWSEDIYRAPPRMPGDVGSSVAGASSSDHTSKRSSFLPTTSRFSTVYGAERSARNKSMPTTMASQASGGYMGPSSTAYRETNESRTSFLKSDPYATNTAPIEGPGPSGFIHDSVVPQPPSDWMPFGFPLAHTICLVTAYSEGELGLRTTLDSVAMTDYPNSHKVILVICDGIIKGKGESKSTPEYVLDMMKDHTIPVEDVEAFSYVAVASGSKRHNMAKIYAGFYDYGTQSNIPLDKQQRVPMMVVVKCGTPDEMVKSKPGNRGKRDSQIILMSFLQKVMFDERMTELEYEMFNGLWKVTGISPDFYEIVLMVDADTKVFPDSLTHMISAMVKDPEIMGLCGETKIANKRDSWVSAIQVFEYFISHHLAKSFESVFGGVTCLPGCFCMYRIKAPKGAQNYWVPILANPDVVEHYSENVVDTLHKKNLLLLGEDRYLTTLMLRTFPKRKQVFVPQAVCKTTVPDSFMVLLSQRRRWINSTIHNLMELVLVRDLCGTFCFSMQFVIFIELIGTLVLPAAIAFTFYVVIISIINQPPQIIPLVLLGLILGLPAILIIITAHSWSYVLWMLIYLLSLPVWNFVLPAYAFWKFDDFSWGDTRKTAGEKTKKAGIEYEGEFDSSKITMKRWAEFERDRRARQSQYWGSRENVTGGVRTASGVWASAPPHHHQQQYDEYYSDA.

Positions methionine 1–lysine 196 are disordered. At methionine 1–arginine 202 the chain is on the cytoplasmic side. Residues serine 18–asparagine 27 are compositionally biased toward basic residues. A compositionally biased stretch (polar residues) spans glycine 43 to glutamate 66. The span at isoleucine 92 to asparagine 105 shows a compositional bias: basic and acidic residues. Over residues serine 137–glycine 150 the composition is skewed to low complexity. Basic and acidic residues-rich tracts occupy residues serine 164 to arginine 177 and isoleucine 187 to lysine 196. Residues proline 203 to methionine 223 traverse the membrane as a helical segment. The Extracellular portion of the chain corresponds to lysine 224–lysine 240. Residues isoleucine 241–phenylalanine 261 form a helical membrane-spanning segment. Topologically, residues asparagine 262–threonine 495 are cytoplasmic. A helical membrane pass occupies residues valine 496 to valine 516. At glycine 517–glutamine 1054 the chain is on the extracellular side. Disordered stretches follow at residues threonine 539–phenylalanine 589 and glycine 601–alanine 648. Low complexity predominate over residues glycine 568–aspartate 581. N-linked (GlcNAc...) asparagine glycans are attached at residues asparagine 608, asparagine 635, and asparagine 1030. A compositionally biased stretch (polar residues) spans asparagine 608–alanine 648. Residues phenylalanine 1055–phenylalanine 1075 traverse the membrane as a helical segment. The Cytoplasmic portion of the chain corresponds to tyrosine 1076–glutamine 1088. A helical membrane pass occupies residues isoleucine 1089–threonine 1109. Over alanine 1110–serine 1114 the chain is Extracellular. Residues tyrosine 1115–alanine 1135 traverse the membrane as a helical segment. At tyrosine 1136–alanine 1229 the chain is on the cytoplasmic side. Positions tryptophan 1210–alanine 1229 are disordered.

This sequence belongs to the chitin synthase family. Class IV subfamily.

The protein localises to the cell membrane. The enzyme catalyses [(1-&gt;4)-N-acetyl-beta-D-glucosaminyl](n) + UDP-N-acetyl-alpha-D-glucosamine = [(1-&gt;4)-N-acetyl-beta-D-glucosaminyl](n+1) + UDP + H(+). Functionally, polymerizes chitin, a structural polymer of the cell wall and septum, by transferring the sugar moiety of UDP-GlcNAc to the non-reducing end of the growing chitin polymer. Might function as a negative regulator on expression of other CHS genes. This Pyricularia oryzae (strain 70-15 / ATCC MYA-4617 / FGSC 8958) (Rice blast fungus) protein is Chitin synthase 4.